Consider the following 654-residue polypeptide: Fimbrin-2 (654 aa).

Calponin-homology (CH) domains follow at residues 124–241, 269–372, 394–500, and 515–623; these read DSEK…KIQL, LPPE…QHRN, SREE…RYNI, and EITD…YWTL. Actin-binding stretches follow at residues 124–372 and 394–623; these read DSEK…QHRN and SREE…YWTL.

As to quaternary structure, interacts with F-actin.

It is found in the cytoplasm. The protein localises to the cytoskeleton. In terms of biological role, cross-links actin filaments (F-actin). Stabilizes and prevents F-actin depolymerization mediated by profilin. May regulate actin cytoarchitecture, cell cycle, cell division, cell elongation and cytoplasmic tractus. This chain is Fimbrin-2, found in Arabidopsis thaliana (Mouse-ear cress).